The primary structure comprises 234 residues: Carbohydrate deacetylase (234 aa).

Residues H60 and H123 each contribute to the Mg(2+) site.

The protein belongs to the YdjC deacetylase family. It depends on Mg(2+) as a cofactor.

Probably catalyzes the deacetylation of acetylated carbohydrates an important step in the degradation of oligosaccharides. The polypeptide is Carbohydrate deacetylase (Bacillus anthracis).